We begin with the raw amino-acid sequence, 293 residues long: Release factor glutamine methyltransferase (293 aa).

Residues 130–134, Asp153, Trp182, and Asn199 contribute to the S-adenosyl-L-methionine site; that span reads GTGSG. Residue 199-202 participates in substrate binding; that stretch reads NPPY.

This sequence belongs to the protein N5-glutamine methyltransferase family. PrmC subfamily.

It carries out the reaction L-glutaminyl-[peptide chain release factor] + S-adenosyl-L-methionine = N(5)-methyl-L-glutaminyl-[peptide chain release factor] + S-adenosyl-L-homocysteine + H(+). Functionally, methylates the class 1 translation termination release factors RF1/PrfA and RF2/PrfB on the glutamine residue of the universally conserved GGQ motif. This chain is Release factor glutamine methyltransferase, found in Prochlorococcus marinus (strain SARG / CCMP1375 / SS120).